We begin with the raw amino-acid sequence, 204 residues long: Guanylate kinase (204 aa).

The region spanning 5-184 (GLLLVLSGPS…AVDHIKSIVE (180 aa)) is the Guanylate kinase-like domain. 12 to 19 (GPSGVGKG) lines the ATP pocket.

The protein belongs to the guanylate kinase family.

It is found in the cytoplasm. The enzyme catalyses GMP + ATP = GDP + ADP. Functionally, essential for recycling GMP and indirectly, cGMP. The protein is Guanylate kinase of Lactobacillus johnsonii (strain CNCM I-12250 / La1 / NCC 533).